A 588-amino-acid chain; its full sequence is Aspartate--tRNA ligase (588 aa).

Glutamate 177 contributes to the L-aspartate binding site. Residues 201–204 (QLFK) form an aspartate region. Arginine 223 serves as a coordination point for L-aspartate. ATP contacts are provided by residues 223–225 (RDE) and glutamine 232. L-aspartate is bound at residue histidine 451. Residue glutamate 485 coordinates ATP. L-aspartate is bound at residue arginine 492. An ATP-binding site is contributed by 537–540 (GLDR).

Belongs to the class-II aminoacyl-tRNA synthetase family. Type 1 subfamily. In terms of assembly, homodimer.

Its subcellular location is the cytoplasm. The enzyme catalyses tRNA(Asp) + L-aspartate + ATP = L-aspartyl-tRNA(Asp) + AMP + diphosphate. Functionally, catalyzes the attachment of L-aspartate to tRNA(Asp) in a two-step reaction: L-aspartate is first activated by ATP to form Asp-AMP and then transferred to the acceptor end of tRNA(Asp). The protein is Aspartate--tRNA ligase of Staphylococcus aureus (strain NCTC 8325 / PS 47).